The chain runs to 395 residues: MGMTTDSMKKEETQKMSENHDWSKLCPDILRKIIESLSSLDFYRAKIVCSDWYSVWKTCVKRPLRPWRIIYRAKYYISTSLMLFDPDEDKIYKNLVGVSDESYRLASSGNWLLMADSRLDFYIVNLLTGKRINLPPMESKIRGAQARFVQSKYFYKSRYICFDNCNSIRISEKEVFESKRAAVLWIDERTGDYFVAWIFNKHYLFTHKKGDDSWCWNRKWTKPGYLDLAYKNNKLYIYNTDNYIKIFDFSGDYPKEDIENNPYHNRPLQYIRGPGEVLLSKRIAIQKSGEVLIILRVIKGYNFLFWIFKMNFERRKWERVDSIGDDEMIIFGHGLTVRAPVQDIGDGVKSGSICFVEYDRQPFSGVFDLATGKVTRPNKFRYHMSYSHWFLPGFA.

The 52-residue stretch at 19–70 (NHDWSKLCPDILRKIIESLSSLDFYRAKIVCSDWYSVWKTCVKRPLRPWRII) folds into the F-box domain.

The polypeptide is F-box only protein 7 (FBX7) (Arabidopsis thaliana (Mouse-ear cress)).